Reading from the N-terminus, the 373-residue chain is NK1 transcription factor-related protein 1 (373 aa).

3 disordered regions span residues 49–74 (ALPA…TVHR), 149–231 (SDFT…RRAR), and 281–328 (KWKK…SMHT). A compositionally biased stretch (basic and acidic residues) spans 53-63 (ESRETSPRHEP). Polar residues predominate over residues 168 to 177 (EESSALTGNN). The span at 196–210 (GQQTQQSSSNGQNHQ) shows a compositional bias: low complexity. Positions 227 to 286 (PRRARTAFTYEQLVALENKFKSTRYLSVCERLNLALSLSLTETQVKIWFQNRRTKWKKQN) form a DNA-binding region, homeobox. The span at 296 to 310 (SGGGGGNGPSNGLGG) shows a compositional bias: gly residues.

This sequence belongs to the NK-1 homeobox family.

Its subcellular location is the nucleus. May participate in the energy homeostasis regulation. In Danio rerio (Zebrafish), this protein is NK1 transcription factor-related protein 1.